The primary structure comprises 418 residues: Equilibrative nucleotide transporter 6 (418 aa).

Helical transmembrane passes span Ala-19–Thr-39, Val-56–Glu-76, Leu-86–Thr-106, Phe-112–Val-132, Leu-142–Thr-162, Met-186–Leu-206, His-264–Tyr-284, Gly-291–Gly-311, Lys-326–Ala-346, Trp-353–Met-373, and Leu-392–Ile-412.

The protein belongs to the SLC29A/ENT transporter (TC 2.A.57) family. As to expression, expressed in leaves and siliques.

The protein resides in the cell membrane. Functionally, nucleoside transporter that can mediate uptake of adenosine, uridine, guanosine or cytidine when expressed in a heterologous system (yeast). The sequence is that of Equilibrative nucleotide transporter 6 (ENT6) from Arabidopsis thaliana (Mouse-ear cress).